Consider the following 862-residue polypeptide: Probable inorganic carbon transporter subunit DabA (862 aa).

Cysteine 365, aspartate 367, histidine 540, and cysteine 555 together coordinate Zn(2+).

This sequence belongs to the inorganic carbon transporter (TC 9.A.2) DabA family. Forms a complex with DabB. Requires Zn(2+) as cofactor.

The protein resides in the cell inner membrane. In terms of biological role, part of an energy-coupled inorganic carbon pump. This Vibrio cholerae serotype O1 (strain ATCC 39315 / El Tor Inaba N16961) protein is Probable inorganic carbon transporter subunit DabA.